A 420-amino-acid polypeptide reads, in one-letter code: Methylaspartate ammonia-lyase 1 (420 aa).

Residue glutamine 173 coordinates (2S,3S)-3-methyl-L-aspartate. Aspartate 237, glutamate 272, and aspartate 306 together coordinate Mg(2+). Residue glutamine 328 participates in (2S,3S)-3-methyl-L-aspartate binding. Lysine 330 acts as the Proton acceptor in catalysis. 359–360 (SC) lines the (2S,3S)-3-methyl-L-aspartate pocket.

Homodimer. Mg(2+) is required as a cofactor.

It carries out the reaction (2S,3S)-3-methyl-L-aspartate = mesaconate + NH4(+). Its pathway is amino-acid degradation; L-glutamate degradation via mesaconate pathway; acetate and pyruvate from L-glutamate: step 2/4. Functionally, involved in the methylaspartate cycle. Catalyzes the formation of the alpha,beta-unsaturated bond by the reversible anti elimination of ammonia from L-threo-beta-methylaspartate (L-threo-(2S,3S)-3-methylaspartate) to give mesaconate. It can also catalyze the amination of fumarate and ethylfumarate, and the deamination of hydroxylamine, hydrazine, methylamine and ethylamine. This is Methylaspartate ammonia-lyase 1 from Carboxydothermus hydrogenoformans (strain ATCC BAA-161 / DSM 6008 / Z-2901).